Here is a 941-residue protein sequence, read N- to C-terminus: Bifunctional glutamine synthetase adenylyltransferase/adenylyl-removing enzyme (941 aa).

An adenylyl removase region spans residues 1–437 (MPMPTVSMSP…AAEFAELLAP (437 aa)). The interval 444–941 (PDALADYWRA…FPLGKDETAL (498 aa)) is adenylyl transferase.

This sequence belongs to the GlnE family. Requires Mg(2+) as cofactor.

It catalyses the reaction [glutamine synthetase]-O(4)-(5'-adenylyl)-L-tyrosine + phosphate = [glutamine synthetase]-L-tyrosine + ADP. It carries out the reaction [glutamine synthetase]-L-tyrosine + ATP = [glutamine synthetase]-O(4)-(5'-adenylyl)-L-tyrosine + diphosphate. In terms of biological role, involved in the regulation of glutamine synthetase GlnA, a key enzyme in the process to assimilate ammonia. When cellular nitrogen levels are high, the C-terminal adenylyl transferase (AT) inactivates GlnA by covalent transfer of an adenylyl group from ATP to specific tyrosine residue of GlnA, thus reducing its activity. Conversely, when nitrogen levels are low, the N-terminal adenylyl removase (AR) activates GlnA by removing the adenylyl group by phosphorolysis, increasing its activity. The regulatory region of GlnE binds the signal transduction protein PII (GlnB) which indicates the nitrogen status of the cell. The protein is Bifunctional glutamine synthetase adenylyltransferase/adenylyl-removing enzyme of Xanthomonas axonopodis pv. citri (strain 306).